The following is a 372-amino-acid chain: N-methyl-L-tryptophan oxidase (372 aa).

Residue 4–34 (DLIIIGSGSVGAAAGYYATRAGLNVLMTDAH) coordinates FAD. Cys308 is subject to S-8alpha-FAD cysteine.

This sequence belongs to the MSOX/MTOX family. MTOX subfamily. In terms of assembly, monomer. It depends on FAD as a cofactor.

The enzyme catalyses N(alpha)-methyl-L-tryptophan + O2 + H2O = L-tryptophan + formaldehyde + H2O2. Its function is as follows. Catalyzes the oxidative demethylation of N-methyl-L-tryptophan. The chain is N-methyl-L-tryptophan oxidase from Escherichia coli O1:K1 / APEC.